The chain runs to 444 residues: MQLHSLIASTALLITSALAATSSSSSIPSSCTISSHATATAQSDLDKYSRCDTLVGNLTIGGGLKTGALANVKEINGSLTIFNATNLTSFAADSLESITDSLNLQSLTILTSASFGSLQSVDSIKLITLPAISSFTSNIKSANNIYISDTSLQSVDGFSALKKVNVFNVNNNKKLTSIKSPVETVSDSLQFSFNGNQTKITFDDLVWANNISLTDVHSVSFANLQKINSSLGFINNSISSLNFTKLNTIGQTFSIVSNDYLKNLSFSNLSTIGGALVVANNTGLQKIGGLDNLTTIGGTLEVVGNFTSLNLDSLKSVKGGADVESKSSNFSCNALKALQKKGGIKGESFVCKNGASSTSVKLSSTSKSQSSQTTAKVSKSSSKAEEKKFTSGDIKAAASASSVSSSGASSSSSKSSKGNAAIMAPIGQTTPLVGLLTAIIMSIM.

An N-terminal signal peptide occupies residues Met1 to Ala19. Residues Asn57, Asn76, Asn83, Asn86, Asn196, Asn210, Asn228, Asn235, Asn242, Asn263, Asn268, Asn280, Asn292, Asn305, and Asn329 are each glycosylated (N-linked (GlcNAc...) asparagine). Low complexity-rich tracts occupy residues Ser359–Ser381 and Lys395–Gly418. The interval Ser359–Gly418 is disordered. The GPI-anchor amidated asparagine moiety is linked to residue Asn419. Residues Ala420–Met444 constitute a propeptide, removed in mature form.

The protein belongs to the SPS2 family. In terms of processing, extensively N- and O-mannosylated.

It is found in the cell membrane. Its subcellular location is the secreted. It localises to the cell wall. Its function is as follows. Has a partially redundant function to ECM33 in cell wall integrity. May be involved in a repair mechanism activated in response to cell wall damage. The chain is Cell wall mannoprotein PST1 (PST1) from Saccharomyces cerevisiae (strain ATCC 204508 / S288c) (Baker's yeast).